A 502-amino-acid chain; its full sequence is MSKDFILAVDQGTTSSRAIIFDKKGNIRKIAQKEFTQIYPKSGWVEHDAMEIWGTQSGVMREALEFGRVKPDQIAAIGITNQRETVIVWDKETGDPVYNAIVWQCRRTSSICDEIKRDPQFVKYIKENTGLVVDAYFSGTKVKWILDNVEGAREKANAGKLLMGTIDTWLIWNLTRGKVHATDYSNASRTMLFNINSLEWDKKILDYLNIPESMLPEVKNSSEVFGVTDSHTLGGAEIPIAGVAGDQHAALFGHCCFEKGMAKNTYGTGCFALMNVGDKPVYSDEGLLTTIAWAENGKPTYALEGSVFIAGAVIQWIRDGLGLVRSAEDSEYYATKIDSTNGVYLVPAFVGLGTPYWDMYARGTIVGITRDTKREHIIRAALEAIAYQAKDVLECMKEDTGLDLAGLRVDGGAVQNNFLMQFQSDILQSEISKPKINEITGLGAVFLAGLAVGFWKDKQELKSILTTEKVFEPQKDSQAVAHDYRGWKKAVERSKAWAECYS.

Thr-13 serves as a coordination point for ADP. The ATP site is built by Thr-13, Thr-14, and Ser-15. Thr-13 is a binding site for sn-glycerol 3-phosphate. Arg-17 serves as a coordination point for ADP. Arg-83, Glu-84, Tyr-136, and Asp-246 together coordinate sn-glycerol 3-phosphate. Glycerol-binding residues include Arg-83, Glu-84, Tyr-136, Asp-246, and Gln-247. Thr-268 and Gly-311 together coordinate ADP. ATP-binding residues include Thr-268, Gly-311, Gln-315, and Gly-412. ADP is bound by residues Gly-412 and Asn-416.

It belongs to the FGGY kinase family.

It carries out the reaction glycerol + ATP = sn-glycerol 3-phosphate + ADP + H(+). Its pathway is polyol metabolism; glycerol degradation via glycerol kinase pathway; sn-glycerol 3-phosphate from glycerol: step 1/1. With respect to regulation, inhibited by fructose 1,6-bisphosphate (FBP). Key enzyme in the regulation of glycerol uptake and metabolism. Catalyzes the phosphorylation of glycerol to yield sn-glycerol 3-phosphate. The sequence is that of Glycerol kinase from Francisella tularensis subsp. mediasiatica (strain FSC147).